The following is a 387-amino-acid chain: 1,3-propanediol dehydrogenase (387 aa).

It belongs to the iron-containing alcohol dehydrogenase family. Homooctamer. Requires Fe cation as cofactor.

The enzyme catalyses propane-1,3-diol + NAD(+) = 3-hydroxypropanal + NADH + H(+). The sequence is that of 1,3-propanediol dehydrogenase (dhaT) from Klebsiella pneumoniae.